Here is a 283-residue protein sequence, read N- to C-terminus: Large ribosomal subunit protein uL2 (283 aa).

2 disordered regions span residues 34-53 (TEPYKKKGGRNNYGRITARH) and 224-283 (AMNP…KKKK). Over residues 232–245 (NGGGQGKSKGGGGW) the composition is skewed to gly residues. The span at 256–268 (AKGKKTRHKRKNS) shows a compositional bias: basic residues.

This sequence belongs to the universal ribosomal protein uL2 family. In terms of assembly, part of the 50S ribosomal subunit. Forms a bridge to the 30S subunit in the 70S ribosome.

One of the primary rRNA binding proteins. Required for association of the 30S and 50S subunits to form the 70S ribosome, for tRNA binding and peptide bond formation. It has been suggested to have peptidyltransferase activity; this is somewhat controversial. Makes several contacts with the 16S rRNA in the 70S ribosome. The protein is Large ribosomal subunit protein uL2 of Methylacidiphilum infernorum (isolate V4) (Methylokorus infernorum (strain V4)).